The chain runs to 337 residues: uncharacterized protein (337 aa).

The 55-residue stretch at 22–76 (PFRLLSLPTLALKNVLLHIDFIDLLELSLASKKCEIYMKTCCLKIDSLHFHFRRI) folds into the F-box domain.

This is an uncharacterized protein from Caenorhabditis elegans.